The following is a 299-amino-acid chain: Lathosterol oxidase (299 aa).

Helical transmembrane passes span 32–52 (ISLL…CATL), 79–99 (FTVQ…LLEI), and 117–137 (FELV…IYWI). The region spanning 124–252 (ISFLFFTDMF…YFTLWDRIGG (129 aa)) is the Fatty acid hydroxylase domain. The short motif at 138–143 (HRGLHH) is the Histidine box-1 element. Residues 151–155 (HKPHH) carry the Histidine box-2 motif. Residues 186–206 (IFPLHKVVYLSLYILVNIWTI) form a helical membrane-spanning segment. A Histidine box-3 motif is present at residues 228-233 (HHTDHH). At S253 the chain carries Phosphoserine. Residues 274 to 299 (EGKRSSHSGNGCKNEKLFNGEFTKTE) form a disordered region. Residues 286-299 (KNEKLFNGEFTKTE) show a composition bias toward basic and acidic residues.

The protein belongs to the sterol desaturase family. It depends on Fe cation as a cofactor.

The protein resides in the endoplasmic reticulum membrane. It carries out the reaction a Delta(7)-sterol + 2 Fe(II)-[cytochrome b5] + O2 + 2 H(+) = a Delta(5),Delta(7)-sterol + 2 Fe(III)-[cytochrome b5] + 2 H2O. It catalyses the reaction lathosterol + 2 Fe(II)-[cytochrome b5] + O2 + 2 H(+) = 7-dehydrocholesterol + 2 Fe(III)-[cytochrome b5] + 2 H2O. The catalysed reaction is 5alpha-cholesta-7,24-dien-3beta-ol + 2 Fe(II)-[cytochrome b5] + O2 + 2 H(+) = 7-dehydrodesmosterol + 2 Fe(III)-[cytochrome b5] + 2 H2O. The protein operates within steroid biosynthesis; cholesterol biosynthesis. Catalyzes the penultimate step of the biosynthesis of cholesterol, the dehydrogenation of lathosterol into 7-dehydrocholesterol (7-DHC). Cholesterol is the major sterol component in mammalian membranes and a precursor for bile acid and steroid hormone synthesis. In addition to its essential role in cholesterol biosynthesis, it also indirectly regulates ferroptosis through the production of 7-DHC. By diverting the spread of damage caused by peroxyl radicals from the phospholipid components to its sterol nucleus, 7-DHC prevents this form of cell death. The chain is Lathosterol oxidase from Homo sapiens (Human).